The sequence spans 1069 residues: DNA annealing helicase and endonuclease ZRANB3 (1069 aa).

The 163-residue stretch at 46 to 208 folds into the Helicase ATP-binding domain; it reads VFALRRDGRC…FMQIEALFPQ (163 aa). The segment at 46–481 is DNA annealing helicase activity; sequence VFALRRDGRC…GRKEKLQATE (436 aa). Position 59 to 66 (59 to 66) interacts with ATP; that stretch reads DEMGLGKT. The short motif at 157 to 160 is the DEAH box element; the sequence is DESH. Residues 325–485 enclose the Helicase C-terminal domain; that stretch reads AVKDYIKMLL…KLQATEDDKE (161 aa). The PIP-box motif lies at 518-525; the sequence is QHDIRSFF. The segment at 617–646 adopts a RanBP2-type zinc-finger fold; that stretch reads PEKGWQCGFCTFLNNPGLPYCEMCENPRSR. The disordered stretch occupies residues 648–720; the sequence is AGRNHLQDNN…PEIGQLNNSG (73 aa). 2 stretches are compositionally biased toward basic and acidic residues: residues 652 to 661 and 677 to 707; these read HLQDNNKNDE and ECER…EDRL. The HNH domain maps to 1001-1041; the sequence is PGEGHFWQVDHIRPVYEGGGQCSLDNLQTLCTVCHKERTAQ. Residues 1001–1069 form an endonuclease activity region; sequence PGEGHFWQVD…SDITRFLVKK (69 aa). An APIM motif motif is present at residues 1064–1068; sequence RFLVK.

It belongs to the SNF2/RAD54 helicase family. As to quaternary structure, interacts (via PIP-box and RanBP2-type zinc finger) with PCNA (when PCNA is polyubiquitinated via 'Lys-63'-linked polyubiquitin).

It is found in the nucleus. Its subcellular location is the chromosome. Its function is as follows. DNA annealing helicase and endonuclease required to maintain genome stability at stalled or collapsed replication forks by facilitating fork restart and limiting inappropriate recombination that could occur during template switching events. Recruited to the sites of stalled DNA replication by polyubiquitinated PCNA and acts as a structure-specific endonuclease that cleaves the replication fork D-loop intermediate, generating an accessible 3'-OH group in the template of the leading strand, which is amenable to extension by DNA polymerase. In addition to endonuclease activity, also catalyzes the fork regression via annealing helicase activity in order to prevent disintegration of the replication fork and the formation of double-strand breaks. The protein is DNA annealing helicase and endonuclease ZRANB3 (Zranb3) of Mus musculus (Mouse).